The primary structure comprises 359 residues: MAEPFLSEYQHQPQTSNCTGAAAVQEELNPERPPGAEERVPEEDSRWQSRAFPQLGGRPGPEGEGSLESQPPPLQTQACPESSCLREGEKGQNGDDSSAGGDFPPPAEVEPTPEAELLAQPCHDSEASKLGAPAAGGEEEWGQQQRQLGKKKHRRRPSKKKRHWKPYYKLTWEEKKKFDEKQSLRASRIRAEMFAKGQPVAPYNTTQFLMDDHDQEEPDLKTGLYSKRAAAKSDDTSDDDFMEEGGEEDGGSDGMGGDGSEFLQRDFSETYERYHTESLQNMSKQELIKEYLELEKCLSRMEDENNRLRLESKRLGGDDARVRELELELDRLRAENLQLLTENELHRQQERAPLSKFGD.

The disordered stretch occupies residues 1–163; that stretch reads MAEPFLSEYQ…RRRPSKKKRH (163 aa). Residues 9–19 are compositionally biased toward polar residues; sequence YQHQPQTSNCT. Composition is skewed to basic and acidic residues over residues 34-47 and 84-93; these read PGAE…DSRW and CLREGEKGQN. Phosphoserine occurs at positions 97 and 98. The segment covering 148–163 has biased composition (basic residues); the sequence is LGKKKHRRRPSKKKRH. The interval 150-177 is basic region; mediates nuclear localization and interaction with 7SK snRNA and NR3C1; it reads KKKHRRRPSKKKRHWKPYYKLTWEEKKK. The interval 202-205 is interaction with P-TEFb; sequence PYNT. The segment at 210-250 is autoinhibitory acidic region; in absence of 7SK snRNA interacts with the basic region preventing interaction with P-TEFb and modulating subcellular localization; it reads MDDHDQEEPDLKTGLYSKRAAAKSDDTSDDDFMEEGGEEDG. The tract at residues 213-262 is disordered; it reads HDQEEPDLKTGLYSKRAAAKSDDTSDDDFMEEGGEEDGGSDGMGGDGSEF. S233 carries the post-translational modification Phosphoserine. T236 carries the post-translational modification Phosphothreonine. The span at 236–251 shows a compositional bias: acidic residues; the sequence is TSDDDFMEEGGEEDGG. S237, S252, and S260 each carry phosphoserine. The stretch at 283–349 forms a coiled coil; sequence SKQELIKEYL…LTENELHRQQ (67 aa). Residues 286–314 are mediates interaction with CCNT1; sequence ELIKEYLELEKCLSRMEDENNRLRLESKR. Positions 310–355 are required for inhibition of ESR1-dependent transcription; that stretch reads LESKRLGGDDARVRELELELDRLRAENLQLLTENELHRQQERAPLS.

It belongs to the HEXIM family. As to quaternary structure, homooligomer and heterooligomer with HEXIM2; probably dimeric. Core component of the 7SK RNP complex, at least composed of 7SK RNA, LARP7, MEPCE, HEXIM1 (or HEXIM2) and P-TEFb (composed of CDK9 and CCNT1/cyclin-T1). Interacts with the N-CoR complex through NCOR1. Interacts with ESR1 and NR3C1. May interact with NF-kappa-B through RELA. Interacts with CCNT2; mediates formation of a tripartite complex with KPNA2. Part of the HDP-RNP complex composed of at least HEXIM1, PRKDC, XRCC5, XRCC6, paraspeckle proteins (SFPQ, NONO, PSPC1, RBM14, and MATR3) and NEAT1 non-coding RNA. Ubiquitously expressed with higher expression in placenta. HEXIM1 and HEXIM2 are differentially expressed. Expressed in endocrine tissues.

Its subcellular location is the nucleus. It is found in the cytoplasm. In terms of biological role, transcriptional regulator which functions as a general RNA polymerase II transcription inhibitor. Core component of the 7SK RNP complex: in cooperation with 7SK snRNA sequesters P-TEFb in a large inactive 7SK snRNP complex preventing RNA polymerase II phosphorylation and subsequent transcriptional elongation. May also regulate NF-kappa-B, ESR1, NR3C1 and CIITA-dependent transcriptional activity. Plays a role in the regulation of DNA virus-mediated innate immune response by assembling into the HDP-RNP complex, a complex that serves as a platform for IRF3 phosphorylation and subsequent innate immune response activation through the cGAS-STING pathway. This is Protein HEXIM1 (HEXIM1) from Homo sapiens (Human).